The chain runs to 314 residues: 3'-5' exoribonuclease YhaM (314 aa).

Residues 14–90 (VDLYLLIKSS…QLKLRNIRPA (77 aa)) constitute a DNA-binding region (OB). One can recognise an HD domain in the interval 163–279 (HVVSMLNLAK…LHYIDNLDAK (117 aa)).

This sequence belongs to the YhaM family.

Its function is as follows. Shows a 3'-5' exoribonuclease activity. The protein is 3'-5' exoribonuclease YhaM of Bacillus licheniformis (strain ATCC 14580 / DSM 13 / JCM 2505 / CCUG 7422 / NBRC 12200 / NCIMB 9375 / NCTC 10341 / NRRL NRS-1264 / Gibson 46).